Reading from the N-terminus, the 398-residue chain is Acetate kinase (398 aa).

Asn-7 provides a ligand contact to Mg(2+). Lys-14 is a binding site for ATP. Arg-91 is a substrate binding site. Catalysis depends on Asp-148, which acts as the Proton donor/acceptor. ATP is bound by residues 208-212, 283-285, and 331-335; these read HIGNG, DMR, and GVGEN. Residue Glu-384 coordinates Mg(2+).

Belongs to the acetokinase family. In terms of assembly, homodimer. The cofactor is Mg(2+). Requires Mn(2+) as cofactor.

The protein localises to the cytoplasm. The catalysed reaction is acetate + ATP = acetyl phosphate + ADP. The protein operates within metabolic intermediate biosynthesis; acetyl-CoA biosynthesis; acetyl-CoA from acetate: step 1/2. Its function is as follows. Catalyzes the formation of acetyl phosphate from acetate and ATP. Can also catalyze the reverse reaction. This is Acetate kinase from Phocaeicola vulgatus (strain ATCC 8482 / DSM 1447 / JCM 5826 / CCUG 4940 / NBRC 14291 / NCTC 11154) (Bacteroides vulgatus).